We begin with the raw amino-acid sequence, 405 residues long: Tyrosine--tRNA ligase (405 aa).

Residues proline 48 to histidine 57 carry the 'HIGH' region motif. The 'KMSKS' region signature appears at lysine 232–serine 236. Lysine 235 is a binding site for ATP. The 62-residue stretch at isoleucine 343–phenylalanine 404 folds into the S4 RNA-binding domain.

It belongs to the class-I aminoacyl-tRNA synthetase family. TyrS type 2 subfamily. In terms of assembly, homodimer.

Its subcellular location is the cytoplasm. The catalysed reaction is tRNA(Tyr) + L-tyrosine + ATP = L-tyrosyl-tRNA(Tyr) + AMP + diphosphate + H(+). Functionally, catalyzes the attachment of tyrosine to tRNA(Tyr) in a two-step reaction: tyrosine is first activated by ATP to form Tyr-AMP and then transferred to the acceptor end of tRNA(Tyr). In Desulfotalea psychrophila (strain LSv54 / DSM 12343), this protein is Tyrosine--tRNA ligase.